Consider the following 101-residue polypeptide: Small ribosomal subunit protein uS14 (101 aa).

This sequence belongs to the universal ribosomal protein uS14 family. In terms of assembly, part of the 30S ribosomal subunit. Contacts proteins S3 and S10.

In terms of biological role, binds 16S rRNA, required for the assembly of 30S particles and may also be responsible for determining the conformation of the 16S rRNA at the A site. The chain is Small ribosomal subunit protein uS14 from Chelativorans sp. (strain BNC1).